A 121-amino-acid polypeptide reads, in one-letter code: Small ribosomal subunit protein uS13 (121 aa).

The tract at residues 94 to 121 (DLPVRGQRTKTNARTRKGPRKSGVQLKK) is disordered. Basic residues predominate over residues 100 to 121 (QRTKTNARTRKGPRKSGVQLKK).

The protein belongs to the universal ribosomal protein uS13 family. As to quaternary structure, part of the 30S ribosomal subunit. Forms a loose heterodimer with protein S19. Forms two bridges to the 50S subunit in the 70S ribosome.

Its function is as follows. Located at the top of the head of the 30S subunit, it contacts several helices of the 16S rRNA. In the 70S ribosome it contacts the 23S rRNA (bridge B1a) and protein L5 of the 50S subunit (bridge B1b), connecting the 2 subunits; these bridges are implicated in subunit movement. Contacts the tRNAs in the A and P-sites. The polypeptide is Small ribosomal subunit protein uS13 (Polynucleobacter necessarius subsp. necessarius (strain STIR1)).